Here is a 252-residue protein sequence, read N- to C-terminus: MFS-type transporter cctQ (252 aa).

2 consecutive transmembrane segments (helical) span residues 54–74 (IGSL…VVLP) and 116–136 (FGSF…IVGF). N-linked (GlcNAc...) asparagine glycosylation is present at asparagine 179. Helical transmembrane passes span 180–200 (FSIC…WILA) and 208–228 (FLVW…YFTT).

This sequence belongs to the major facilitator superfamily.

It localises to the membrane. It functions in the pathway mycotoxin biosynthesis. Its function is as follows. MFS-type transporter; part of the gene cluster that mediates the biosynthesis of the mycotoxin cyclochlorotine, a hepatotoxic and carcinogenic cyclic chlorinated pentapeptide. Most likely responsible for cyclochlorotine secretion and thereby may contribute to intrinsic resistance. The sequence is that of MFS-type transporter cctQ from Talaromyces islandicus (Penicillium islandicum).